Consider the following 195-residue polypeptide: Phosphoheptose isomerase (195 aa).

One can recognise an SIS domain in the interval 36–195; that stretch reads VSKVLQSGNT…IVEYNLFKME (160 aa). 51-53 contacts substrate; sequence NGG. The Zn(2+) site is built by His-60 and Glu-64. Residues Glu-64, 95 to 96, 121 to 123, Ser-126, and Gln-173 contribute to the substrate site; these read ND and STS. Zn(2+) is bound by residues Gln-173 and His-181.

Belongs to the SIS family. GmhA subfamily. The cofactor is Zn(2+).

The protein localises to the cytoplasm. The enzyme catalyses 2 D-sedoheptulose 7-phosphate = D-glycero-alpha-D-manno-heptose 7-phosphate + D-glycero-beta-D-manno-heptose 7-phosphate. It functions in the pathway carbohydrate biosynthesis; D-glycero-D-manno-heptose 7-phosphate biosynthesis; D-glycero-alpha-D-manno-heptose 7-phosphate and D-glycero-beta-D-manno-heptose 7-phosphate from sedoheptulose 7-phosphate: step 1/1. Its function is as follows. Catalyzes the isomerization of sedoheptulose 7-phosphate in D-glycero-D-manno-heptose 7-phosphate. The polypeptide is Phosphoheptose isomerase (Leptospira borgpetersenii serovar Hardjo-bovis (strain JB197)).